The sequence spans 469 residues: Arginine biosynthesis bifunctional protein ArgJ, mitochondrial (469 aa).

Substrate-binding residues include Thr-199, Lys-228, Thr-239, Glu-325, Asn-464, and Thr-469. Thr-239 acts as the Nucleophile in catalysis.

Belongs to the ArgJ family. Heterodimer of an alpha and a beta chain. In terms of processing, the alpha and beta chains are autoproteolytically processed from a single precursor protein within the mitochondrion.

The protein localises to the mitochondrion matrix. The enzyme catalyses N(2)-acetyl-L-ornithine + L-glutamate = N-acetyl-L-glutamate + L-ornithine. It carries out the reaction L-glutamate + acetyl-CoA = N-acetyl-L-glutamate + CoA + H(+). It functions in the pathway amino-acid biosynthesis; L-arginine biosynthesis; L-ornithine and N-acetyl-L-glutamate from L-glutamate and N(2)-acetyl-L-ornithine (cyclic): step 1/1. Its pathway is amino-acid biosynthesis; L-arginine biosynthesis; N(2)-acetyl-L-ornithine from L-glutamate: step 1/4. Its function is as follows. Catalyzes two activities which are involved in the cyclic version of arginine biosynthesis: the synthesis of acetylglutamate from glutamate and acetyl-CoA, and of ornithine by transacetylation between acetylornithine and glutamate. This chain is Arginine biosynthesis bifunctional protein ArgJ, mitochondrial, found in Neurospora crassa (strain ATCC 24698 / 74-OR23-1A / CBS 708.71 / DSM 1257 / FGSC 987).